The chain runs to 198 residues: MHYPEPISKLIDSFMKLPGIGPKTAQRLAFHVLDMKEDDVVQFAKALVDVKRELTYCSECGHITEQDPCYICQDKQRDRSVICVVEDDKDVIAMEKMREYKGLYHVLHGSISPMDGIGPEDINIPSLINRLKDEEVKELILAMNPNLEGESTAMYISRLVKPIGITVTRLAQGLSVGGDLEYADEVTLSKAIMGRTEM.

The C4-type zinc-finger motif lies at C57 to C72. The region spanning S80 to S175 is the Toprim domain.

This sequence belongs to the RecR family.

Its function is as follows. May play a role in DNA repair. It seems to be involved in an RecBC-independent recombinational process of DNA repair. It may act with RecF and RecO. The protein is Recombination protein RecR of Staphylococcus saprophyticus subsp. saprophyticus (strain ATCC 15305 / DSM 20229 / NCIMB 8711 / NCTC 7292 / S-41).